The sequence spans 117 residues: Large ribosomal subunit protein uL22 (117 aa).

The protein belongs to the universal ribosomal protein uL22 family. In terms of assembly, part of the 50S ribosomal subunit.

This protein binds specifically to 23S rRNA; its binding is stimulated by other ribosomal proteins, e.g. L4, L17, and L20. It is important during the early stages of 50S assembly. It makes multiple contacts with different domains of the 23S rRNA in the assembled 50S subunit and ribosome. Its function is as follows. The globular domain of the protein is located near the polypeptide exit tunnel on the outside of the subunit, while an extended beta-hairpin is found that lines the wall of the exit tunnel in the center of the 70S ribosome. This chain is Large ribosomal subunit protein uL22, found in Lactobacillus helveticus (strain DPC 4571).